The primary structure comprises 394 residues: NADH-quinone oxidoreductase subunit D 2 (394 aa).

Belongs to the complex I 49 kDa subunit family. As to quaternary structure, NDH-1 is composed of 14 different subunits. Subunits NuoB, C, D, E, F, and G constitute the peripheral sector of the complex.

Its subcellular location is the cell membrane. The enzyme catalyses a quinone + NADH + 5 H(+)(in) = a quinol + NAD(+) + 4 H(+)(out). NDH-1 shuttles electrons from NADH, via FMN and iron-sulfur (Fe-S) centers, to quinones in the respiratory chain. The immediate electron acceptor for the enzyme in this species is believed to be a menaquinone. Couples the redox reaction to proton translocation (for every two electrons transferred, four hydrogen ions are translocated across the cytoplasmic membrane), and thus conserves the redox energy in a proton gradient. This is NADH-quinone oxidoreductase subunit D 2 from Streptomyces griseus subsp. griseus (strain JCM 4626 / CBS 651.72 / NBRC 13350 / KCC S-0626 / ISP 5235).